Reading from the N-terminus, the 95-residue chain is MSDNDSRKNLRMPEEDEVFAVVMDMLGANRVKVRCMDGVERTARIPGKMQKRIWIREDDVVLVEPWDWQDEKADITWRYEKQDADQLREEGHIQE.

The S1-like domain maps to 6–80 (SRKNLRMPEE…EKADITWRYE (75 aa)).

The protein belongs to the eIF-1A family.

Seems to be required for maximal rate of protein biosynthesis. Enhances ribosome dissociation into subunits and stabilizes the binding of the initiator Met-tRNA(I) to 40 S ribosomal subunits. The protein is Translation initiation factor 1A of Haloarcula marismortui (strain ATCC 43049 / DSM 3752 / JCM 8966 / VKM B-1809) (Halobacterium marismortui).